Reading from the N-terminus, the 151-residue chain is Myosin catalytic light chain, smooth muscle (151 aa).

N-acetylalanine is present on Ala1. EF-hand domains lie at 6–41, 83–118, and 119–151; these read DRIT…LGQN, GSYE…LGEK, and MSEE…LLEG.

In terms of biological role, in molluscan muscle, calcium regulation is associated with myosin rather than with actin. Muscle myosin contains two types of light chains: the catalytic light chain, essential for ATPase activity, and the regulatory light chain, a calcium-binding protein responsible for Ca(2+) dependent binding and Ca(2+) dependent Mg-ATPase activity. The protein is Myosin catalytic light chain, smooth muscle of Halocynthia roretzi (Sea squirt).